A 478-amino-acid polypeptide reads, in one-letter code: Ketoisovalerate oxidoreductase subunit VorA (478 aa).

In terms of assembly, heterotrimer of the VorA, VorB and VorC subunits.

The protein is Ketoisovalerate oxidoreductase subunit VorA (vorA) of Methanothermobacter marburgensis (strain ATCC BAA-927 / DSM 2133 / JCM 14651 / NBRC 100331 / OCM 82 / Marburg) (Methanobacterium thermoautotrophicum).